The sequence spans 802 residues: Outer membrane usher protein CssD (802 aa).

The protein belongs to the fimbrial export usher family.

The protein resides in the cell outer membrane. In terms of biological role, involved in the export and assembly of C6 fimbrial subunits across the outer membrane. This is Outer membrane usher protein CssD (cssD) from Escherichia coli.